A 367-amino-acid polypeptide reads, in one-letter code: Aurora kinase (367 aa).

2 stretches are compositionally biased toward polar residues: residues methionine 1–isoleucine 29 and histidine 37–isoleucine 48. The tract at residues methionine 1–valine 52 is disordered. Serine 5 is modified (phosphoserine; by autocatalysis). Serine 76 carries the phosphoserine modification. The 252-residue stretch at phenylalanine 104–isoleucine 355 folds into the Protein kinase domain. ATP is bound by residues leucine 110–valine 118 and lysine 133. The active-site Proton acceptor is aspartate 227. Threonine 260 carries the phosphothreonine; by autocatalysis modification.

This sequence belongs to the protein kinase superfamily. Ser/Thr protein kinase family. Aurora subfamily. Component of the CPC complex at least composed of IPL1, BIR1 and SLI15.

The protein resides in the nucleus. Its subcellular location is the cytoplasm. The protein localises to the cytoskeleton. It is found in the spindle. It localises to the chromosome. The protein resides in the centromere. Its subcellular location is the kinetochore. The enzyme catalyses L-seryl-[protein] + ATP = O-phospho-L-seryl-[protein] + ADP + H(+). It carries out the reaction L-threonyl-[protein] + ATP = O-phospho-L-threonyl-[protein] + ADP + H(+). In terms of biological role, component of the chromosomal passenger complex (CPC), a complex that acts as a key regulator of chromosome segregation and cytokinesis. Has a role in error-correction of aberrent kinetochore-microtubule attachments to ensure that sister kinetochores become bioriented and connect to opposite poles by promoting spindle assembly checkpoint signaling. Acts in opposition to the phosphatase PP1. Not required for kinetochore detachment from microtubules during replication of centromeric DNA. Phosphorylates histone H3 to form H3S10ph during mitosis and meiosis. Phosphorylates CNN1, which contributes to the enrichment of CNN1 on anaphase kinetochores. Phosphorylates RGD1. The chain is Aurora kinase (IPL1) from Saccharomyces cerevisiae (strain ATCC 204508 / S288c) (Baker's yeast).